The primary structure comprises 391 residues: tRNA-specific 2-thiouridylase MnmA (391 aa).

ATP contacts are provided by residues 9–16 and M35; that span reads GMSGGVDS. The segment at 95–97 is interaction with target base in tRNA; sequence NPD. C100 serves as the catalytic Nucleophile. Residues C100 and C196 are joined by a disulfide bond. Residue G124 participates in ATP binding. Residues 146–148 are interaction with tRNA; it reads KDQ. C196 acts as the Cysteine persulfide intermediate in catalysis. The tract at residues 308–309 is interaction with tRNA; that stretch reads RY.

The protein belongs to the MnmA/TRMU family.

It is found in the cytoplasm. It carries out the reaction S-sulfanyl-L-cysteinyl-[protein] + uridine(34) in tRNA + AH2 + ATP = 2-thiouridine(34) in tRNA + L-cysteinyl-[protein] + A + AMP + diphosphate + H(+). Catalyzes the 2-thiolation of uridine at the wobble position (U34) of tRNA, leading to the formation of s(2)U34. This Burkholderia cenocepacia (strain HI2424) protein is tRNA-specific 2-thiouridylase MnmA.